The sequence spans 1036 residues: MASSVGNVADSTGLAELAHREYQAGDFEAAERHCMQLWRQEPDNTGVLLLLSSIHFQCRRLDRSAHFSTLAIKQNPLLAEAYSNLGNVYKERGQLQEAIEHYRHALRLKPDFIDGYINLAAALVAAGDMEGAVQAYVSALQYNPDLYCVRSDLGNLLKALGRLEEAKACYLKAIETQPNFAVAWSNLGCVFNAQGEIWLAIHHFEKAVTLDPNFLDAYINLGNVLKEARIFDRAVAAYLRALSLSPNHAVVHGNLACVYYEQGLIDLAIDTYRRAIELQPHFPDAYCNLANALKEKGSVAEAEDCYNTALRLCPTHADSLNNLANIKREQGNIEEAVRLYRKALEVFPEFAAAHSNLASVLQQQGKLQEALMHYKEAIRISPTFADAYSNMGNTLKEMQDVQGALQCYTRAIQINPAFADAHSNLASIHKDSGNIPEAIASYRTALKLKPDFPDAYCNLAHCLQIVCDWTDYDERMKKLVSIVAEQLEKNRLPSVHPHHSMLYPLSHGFRKAIAERHGNLCLDKINVLHKPPYEHPKDLKLSDGRLRVGYVSSDFGNHPTSHLMQSIPGMHNPDKFEVFCYALSPDDGTNFRVKVMAEANHFIDLSQIPCNGKAADRIHQDGIHILVNMNGYTKGARNELFALRPAPIQAMWLGYPGTSGALFMDYIITDQETSPAEVAEQYSEKLAYMPHTFFIGDHANMFPHLKKKAVIDFKSNGHIYDNRIVLNGIDLKAFLDSLPDVKIVKMKCPDGGDNADTTNTALNMPVIPMNTIAEAVIEMINRGQIQITINGFSISNGLATTQINNKAATGEEVPRTIIVTTRSQYGLPEDAIVYCNFNQLYKIDPSTLQMGANILKRVPNSVLWLLRFPAVGEPNIQQYAQNMGLPQNRIIFSPVAPKEEHVRRGQLADVCLDTPLCNGHTTGMDVLWAGTPMVTMPGETLASRVAASQLTCLGCLELIAKSRQEYEDIAVKLGTDLEYLKKIRGKVWKQRISSPLFNTKQYTMELERLYLQMWEHYAAGNKPDHMIKPVEVTESA.

A2 is modified (N-acetylalanine). Phosphoserine; by GSK3-beta; alternate is present on residues S3 and S4. O-linked (GlcNAc) serine; alternate glycans are attached at residues S3 and S4. TPR repeat units lie at residues 11-44, 79-112, 113-146, 147-180, 181-214, 215-248, 249-282, 283-316, 317-350, 351-384, 385-418, and 419-452; these read STGLAELAHREYQAGDFEAAERHCMQLWRQEPDN, AEAYSNLGNVYKERGQLQEAIEHYRHALRLKPDF, IDGYINLAAALVAAGDMEGAVQAYVSALQYNPDL, YCVRSDLGNLLKALGRLEEAKACYLKAIETQPNF, AVAWSNLGCVFNAQGEIWLAIHHFEKAVTLDPNF, LDAYINLGNVLKEARIFDRAVAAYLRALSLSPNH, AVVHGNLACVYYEQGLIDLAIDTYRRAIELQPHF, PDAYCNLANALKEKGSVAEAEDCYNTALRLCPTH, ADSLNNLANIKREQGNIEEAVRLYRKALEVFPEF, AAAHSNLASVLQQQGKLQEALMHYKEAIRISPTF, ADAYSNMGNTLKEMQDVQGALQCYTRAIQINPAF, and ADAHSNLASIHKDSGNIPEAIASYRTALKLKPDF. S389 carries O-linked (GlcNAc) serine; by autocatalysis glycosylation. T444 bears the Phosphothreonine mark. Residues 453–463 form a TPR 13; truncated repeat; sequence PDAYCNLAHCL. Residues 454 to 456 carry the DFP motif motif; that stretch reads DAY. The Nuclear localization signal motif lies at 478–493; that stretch reads KLVSIVAEQLEKNRLP. H498 functions as the Proton acceptor in the catalytic mechanism. UDP contacts are provided by residues Q839, K842, 896–898, 901–904, 920–922, and D925; these read APK, HVRR, and HTT. The residue at position 979 (Y979) is a Phosphotyrosine. The required for phosphatidylinositol 3,4,5-triphosphate binding stretch occupies residues 981-1000; sequence KKIRGKVWKQRISSPLFNTK.

Belongs to the glycosyltransferase 41 family. O-GlcNAc transferase subfamily. In terms of assembly, monomer; may exist in different oligomerization states in cells. Homotrimer, oligomerizes via TPR repeats 6 and 7. Trimerization is not necessary for activity in vitro, however it increases affinity for UDP-GlcNAc. A heterotrimer consisting of two 110 kDa subunits and one highly related 78 kDa subunit is isolated from liver. Component of a THAP1/THAP3-HCFC1-OGT complex. Component of the NSL complex at least composed of MOF/KAT8, KANSL1, KANSL2, KANSL3, MCRS1, PHF20, OGT1/OGT, WDR5 and HCFC1. Found in a complex with KIF5B, RHOT1, RHOT2 and TRAK1. Found in a complex composed of at least SINHCAF, SIN3A, HDAC1, SAP30, RBBP4, OGT and TET1. Component of a complex composed of KMT2E/MLL5, OGT and USP7; the complex stabilizes KMT2E/MLL5, preventing KMT2E/MLL5 ubiquitination and proteasomal-mediated degradation. Interacts (via TPRs 1-6) with SIN3A; the interaction mediates transcriptional repression in parallel with histone deacetylase. Interacts (via TPR 5-6) with TET1, TET2 and TET3. Interacts (via TPR repeats 6 and 7) with ATXN10. Interacts with NSD2. Interacts with PROSER1; this interaction mediates TET2 O-GlcNAcylation and stability by promoting the interaction between OGT and TET2. In terms of processing, several different immunologically-related forms of this protein are found in different tissues (with apparent molecular weights of 110, 80 and 78 kDa); they are probably the result of alternative splicing and/or proteolysis. O-glycosylated; contains O-GlcNAc. Both p110 and p78 forms are O-glycosylated. Post-translationally, ubiquitinated by the SCF(FBXO31) complex, leading to its proteasomal degradation. In terms of processing, phosphorylation on Ser-3 or Ser-4 by GSK3-beta positively regulates its activity. Phosphorylation at Thr-444 by AMPK promotes nuclear localization. Glycosylated via autocatalysis; O-GlcNAcylation at Ser-389 promotes nuclear localization. As to expression, expressed in brain, heart, liver, thymus, muscle, lung, spleen, uterus and ovary; in the kidney only an immunologically-related 78 kDa band is present, which is also present in liver and muscle. In the pancreas, expressed in both exocrine acinar cells and in endocrine cells of the islets of Langerhans.

The protein localises to the cytoplasm. It is found in the nucleus. It localises to the cell membrane. Its subcellular location is the mitochondrion membrane. The protein resides in the cell projection. The enzyme catalyses L-seryl-[protein] + UDP-N-acetyl-alpha-D-glucosamine = 3-O-(N-acetyl-beta-D-glucosaminyl)-L-seryl-[protein] + UDP + H(+). It catalyses the reaction L-threonyl-[protein] + UDP-N-acetyl-alpha-D-glucosamine = 3-O-(N-acetyl-beta-D-glucosaminyl)-L-threonyl-[protein] + UDP + H(+). Its pathway is protein modification; protein glycosylation. Its activity is regulated as follows. Inhibited by UDP, UTP and UDP-GlcNAc; 50 mM NaCl or KCl inhibit activity about 70%. Functionally, catalyzes the transfer of a single N-acetylglucosamine from UDP-GlcNAc to a serine or threonine residue in cytoplasmic and nuclear proteins resulting in their modification with a beta-linked N-acetylglucosamine (O-GlcNAc). Glycosylates a large and diverse number of proteins including histone H2B, AKT1, AMPK, ATG4B, CAPRIN1, EZH2, FNIP1, GSDMD, KRT7, LMNA, LMNB1, LMNB2, RPTOR, HOXA1, PFKL, KMT2E/MLL5, MAPT/TAU, TET2, RBL2, RET, NOD2 and HCFC1. Can regulate their cellular processes via cross-talk between glycosylation and phosphorylation or by affecting proteolytic processing. Involved in insulin resistance in muscle and adipocyte cells via glycosylating insulin signaling components and inhibiting the 'Thr-308' phosphorylation of AKT1, enhancing IRS1 phosphorylation and attenuating insulin signaling. Involved in glycolysis regulation by mediating glycosylation of 6-phosphofructokinase PFKL, inhibiting its activity. Plays a key role in chromatin structure by mediating O-GlcNAcylation of 'Ser-112' of histone H2B: recruited to CpG-rich transcription start sites of active genes via its interaction with TET proteins (TET1, TET2 or TET3). As part of the NSL complex indirectly involved in acetylation of nucleosomal histone H4 on several lysine residues. O-GlcNAcylation of 'Ser-75' of EZH2 increases its stability, and facilitating the formation of H3K27me3 by the PRC2/EED-EZH2 complex. Stabilizes KMT2E/MLL5 by mediating its glycosylation, thereby preventing KMT2E/MLL5 ubiquitination. Regulates circadian oscillation of the clock genes and glucose homeostasis in the liver. Stabilizes clock proteins BMAL1 and CLOCK through O-glycosylation, which prevents their ubiquitination and subsequent degradation. Promotes the CLOCK-BMAL1-mediated transcription of genes in the negative loop of the circadian clock such as PER1/2 and CRY1/2. O-glycosylates HCFC1 and regulates its proteolytic processing and transcriptional activity. Component of a THAP1/THAP3-HCFC1-OGT complex that is required for the regulation of the transcriptional activity of RRM1. Regulates mitochondrial motility in neurons by mediating glycosylation of TRAK1. Promotes autophagy by mediating O-glycosylation of ATG4B. Acts as a regulator of mTORC1 signaling by mediating O-glycosylation of RPTOR and FNIP1: O-GlcNAcylation of RPTOR in response to glucose sufficiency promotes activation of the mTORC1 complex. This chain is UDP-N-acetylglucosamine--peptide N-acetylglucosaminyltransferase 110 kDa subunit (Ogt), found in Rattus norvegicus (Rat).